The primary structure comprises 162 residues: Peptidyl-prolyl cis-trans isomerase-like 1 (162 aa).

Residues 1-155 enclose the PPIase cyclophilin-type domain; that stretch reads MTTNIVLETT…EEVKIVKARV (155 aa).

It belongs to the cyclophilin-type PPIase family. PPIL1 subfamily.

The enzyme catalyses [protein]-peptidylproline (omega=180) = [protein]-peptidylproline (omega=0). PPIases accelerate the folding of proteins. It catalyzes the cis-trans isomerization of proline imidic peptide bonds in oligopeptides. This chain is Peptidyl-prolyl cis-trans isomerase-like 1 (CYP1), found in Gibberella zeae (strain ATCC MYA-4620 / CBS 123657 / FGSC 9075 / NRRL 31084 / PH-1) (Wheat head blight fungus).